The primary structure comprises 79 residues: Putative defensin-like protein 29 (79 aa).

A signal peptide spans 1 to 26 (MASSGKCVFLVFLCMVALLAPSEVHA). 3 disulfide bridges follow: C45–C65, C51–C74, and C55–C76.

This sequence belongs to the DEFL family.

The protein localises to the secreted. This Arabidopsis thaliana (Mouse-ear cress) protein is Putative defensin-like protein 29.